Reading from the N-terminus, the 458-residue chain is Bifunctional protein GlmU (458 aa).

The segment at 1–229 is pyrophosphorylase; sequence MNKFAIVLAA…FDESLGVNDR (229 aa). Residues 8–11, Lys22, Gln72, and 77–78 each bind UDP-N-acetyl-alpha-D-glucosamine; these read LAAG and GT. Asp102 is a binding site for Mg(2+). The UDP-N-acetyl-alpha-D-glucosamine site is built by Gly139, Glu154, Asn169, and Asn227. Asn227 provides a ligand contact to Mg(2+). The segment at 230–250 is linker; it reads VALSQAEATMRKRINHEHMVN. The tract at residues 251–458 is N-acetyltransferase; it reads GVTLIDPATT…AKKMPHYRGQ (208 aa). UDP-N-acetyl-alpha-D-glucosamine contacts are provided by Arg332 and Lys350. The active-site Proton acceptor is His362. 2 residues coordinate UDP-N-acetyl-alpha-D-glucosamine: Tyr365 and Asn376. Acetyl-CoA is bound by residues Ala379, Ser404, Ala422, and Arg439.

In the N-terminal section; belongs to the N-acetylglucosamine-1-phosphate uridyltransferase family. This sequence in the C-terminal section; belongs to the transferase hexapeptide repeat family. As to quaternary structure, homotrimer. Requires Mg(2+) as cofactor.

The protein localises to the cytoplasm. The catalysed reaction is alpha-D-glucosamine 1-phosphate + acetyl-CoA = N-acetyl-alpha-D-glucosamine 1-phosphate + CoA + H(+). The enzyme catalyses N-acetyl-alpha-D-glucosamine 1-phosphate + UTP + H(+) = UDP-N-acetyl-alpha-D-glucosamine + diphosphate. It functions in the pathway nucleotide-sugar biosynthesis; UDP-N-acetyl-alpha-D-glucosamine biosynthesis; N-acetyl-alpha-D-glucosamine 1-phosphate from alpha-D-glucosamine 6-phosphate (route II): step 2/2. It participates in nucleotide-sugar biosynthesis; UDP-N-acetyl-alpha-D-glucosamine biosynthesis; UDP-N-acetyl-alpha-D-glucosamine from N-acetyl-alpha-D-glucosamine 1-phosphate: step 1/1. Its pathway is bacterial outer membrane biogenesis; LPS lipid A biosynthesis. Its function is as follows. Catalyzes the last two sequential reactions in the de novo biosynthetic pathway for UDP-N-acetylglucosamine (UDP-GlcNAc). The C-terminal domain catalyzes the transfer of acetyl group from acetyl coenzyme A to glucosamine-1-phosphate (GlcN-1-P) to produce N-acetylglucosamine-1-phosphate (GlcNAc-1-P), which is converted into UDP-GlcNAc by the transfer of uridine 5-monophosphate (from uridine 5-triphosphate), a reaction catalyzed by the N-terminal domain. The protein is Bifunctional protein GlmU of Lactococcus lactis subsp. cremoris (strain MG1363).